The chain runs to 2385 residues: Neuron navigator 3 (2385 aa).

Residues 17–38 are disordered; the sequence is SKPVHTALPIPNLGTTGSQHCS. Positions 29-38 are enriched in polar residues; sequence LGTTGSQHCS. Residues 77–184 form the Calponin-homology (CH) domain; that stretch reads KEDSKIYTDW…LFFSLSRYKQ (108 aa). Residues 203 to 625 are disordered; the sequence is VTHASPPSEA…LPQQQQHSHP (423 aa). Polar residues-rich tracts occupy residues 210 to 243, 258 to 279, and 297 to 316; these read SEAS…TSQK, GSSS…FNSI, and KGPQ…STAG. Over residues 318–329 the composition is skewed to low complexity; it reads PPASAIPSPSAS. A compositionally biased stretch (polar residues) spans 335–352; that stretch reads KSMNVKHSATSTMLTVKQ. Low complexity-rich tracts occupy residues 353–363 and 427–439; these read SSTATSPTPSS and NSGL…TNSS. The span at 465–491 shows a compositional bias: basic and acidic residues; the sequence is PKEKEEKNRDKNKVCTEKPVKEEKDQV. Positions 521–535 are enriched in low complexity; that stretch reads IPSSSGIPKPGSKVP. 3 stretches are compositionally biased toward polar residues: residues 537–548, 557–567, and 591–625; these read VKQTISPGSTAS, TKGSPSQSLSK, and ASPS…HSHP. Positions 679–707 form a coiled coil; that stretch reads ETRRMRTVKNIADLRQNLEETMSSLRGTQ. Disordered regions lie at residues 877 to 1312, 1351 to 1370, 1410 to 1468, 1650 to 1778, 1850 to 1881, and 2360 to 2385; these read ADSW…SPLF, SSSS…TSLH, LSES…SAMS, GALN…KRQN, DRLK…SRQS, and SSTQ…ESTL. The span at 882–895 shows a compositional bias: low complexity; sequence DSSSVSSGLSDTLD. A compositionally biased stretch (polar residues) spans 896-925; sequence NISTDDLNTTSSVSSYSNITVPSRKNTQLR. The segment covering 942-959 has biased composition (basic and acidic residues); sequence EELKKPEEDFDSHGDAGG. Over residues 979–988 the composition is skewed to polar residues; it reads ASLSVSQTGS. The segment covering 1014–1026 has biased composition (basic and acidic residues); it reads GKTDDAKASEKGK. Composition is skewed to low complexity over residues 1074 to 1092 and 1157 to 1170; these read GSSA…GSAT and SSTS…SSKS. Residues 1187-1196 are compositionally biased toward polar residues; the sequence is GRSSPVTVNQ. Composition is skewed to low complexity over residues 1206–1226 and 1253–1263; these read VSDS…TSAS and GAKAGGKSASA. Over residues 1264–1289 the composition is skewed to polar residues; that stretch reads PNTEGVKSSSVMPSPSTTLARQGSLE. A compositionally biased stretch (gly residues) spans 1296–1305; the sequence is GSMGSAGGLS. The segment covering 1436–1445 has biased composition (basic and acidic residues); that stretch reads NQEEGKEWLR. Residues 1446-1462 show a composition bias toward polar residues; that stretch reads SHSTGGLQDTGNQSPLV. Serine 1459 and serine 1463 each carry phosphoserine. Residues 1562–1653 are a coiled coil; the sequence is AEEKAHSEQI…AQAAIQGALN (92 aa). Residues 1672 to 1689 show a composition bias toward low complexity; the sequence is SVSSINSATSHSSIGSGN. The span at 1701-1714 shows a compositional bias: polar residues; it reads WVNSRGSELRSSFK. Residues 1794–1861 adopt a coiled-coil conformation; that stretch reads EAEAEIILQL…LKAETGNTAK (68 aa). Low complexity predominate over residues 1867 to 1881; sequence SESSSSTSSSSSRQS.

This sequence belongs to the Nav/unc-53 family. As to expression, highly expressed in brain. Expressed at low levels in heart and placenta. Present in activated T-cells but not in resting T-cells (at protein level). Down-regulated in primary neuroblastoma.

The protein resides in the nucleus outer membrane. Plays a role in cell migration. May be involved in neuron regeneration. May regulate IL2 production by T-cells. This is Neuron navigator 3 (NAV3) from Homo sapiens (Human).